Consider the following 158-residue polypeptide: Pyruvoyl-dependent arginine decarboxylase (158 aa).

Ser44 is modified (pyruvic acid (Ser)).

It belongs to the PdaD family. The cofactor is pyruvate.

It carries out the reaction L-arginine + H(+) = agmatine + CO2. In Pyrococcus furiosus (strain ATCC 43587 / DSM 3638 / JCM 8422 / Vc1), this protein is Pyruvoyl-dependent arginine decarboxylase.